Reading from the N-terminus, the 268-residue chain is Zinc finger protein SNAI2 (268 aa).

Residues 1–20 form an SNAG domain region; sequence MPRSFLVKKHFNASKKPNYS. The interval 84-116 is disordered; it reads GRVSPLPSSDTSSKDHSGSESPISDEEERLQPK. 4 C2H2-type zinc fingers span residues 128-150, 159-181, 185-207, and 213-235; these read FQCNLCNKTYSTFSGLAKHKQLH, FSCKYCDKEYVSLGALKMHIRTH, CVCKICGKAFSRPWLLQGHIRTH, and FSCPHCNRAFADRSNLRAHLQTH. The C2H2-type 5; atypical zinc finger occupies 241–264; sequence YQCKNCSKTFSRMSLLHKHEESGC.

The protein belongs to the snail C2H2-type zinc-finger protein family. Interacts (via SNAG domain) with LIMD1 (via LIM domains), WTIP (via LIM domains) and AJUBA (via LIM domains). Interacts (via zinc fingers) with KPNA2, KPNB1 and TNPO1. May interact (via zinc fingers) with IPO7. Phosphorylated by GSK3B. Once phosphorylated, it becomes a target for ubiquitination. Post-translationally, ubiquitinated by the SCF(FBXO11) complex; ubiquitination requires previous GSK3B-mediated SNAI2 phosphorylation.

It localises to the nucleus. The protein localises to the cytoplasm. In terms of biological role, transcriptional repressor that modulates both activator-dependent and basal transcription. Involved in the generation and migration of neural crest cells. Plays a role in mediating RAF1-induced transcriptional repression of the TJ protein, occludin (OCLN) and subsequent oncogenic transformation of epithelial cells. Represses BRCA2 expression by binding to its E2-box-containing silencer and recruiting CTBP1 and HDAC1 in breast cells. In epidermal keratinocytes, binds to the E-box in ITGA3 promoter and represses its transcription. Involved in the regulation of ITGB1 and ITGB4 expression and cell adhesion and proliferation in epidermal keratinocytes. Binds to E-box2 domain of BSG and activates its expression during TGFB1-induced epithelial-mesenchymal transition (EMT) in hepatocytes. Represses E-Cadherin/CDH1 transcription via E-box elements. Involved in osteoblast maturation. Binds to RUNX2 and SOC9 promoters and may act as a positive and negative transcription regulator, respectively, in osteoblasts. Binds to CXCL12 promoter via E-box regions in mesenchymal stem cells and osteoblasts. Plays an essential role in TWIST1-induced EMT and its ability to promote invasion and metastasis. The chain is Zinc finger protein SNAI2 (Snai2) from Rattus norvegicus (Rat).